Here is a 63-residue protein sequence, read N- to C-terminus: uncharacterized protein (63 aa).

Helical transmembrane passes span 3–23 and 42–62; these read VFLI…VYYI and ALVC…TKLL.

It localises to the cell membrane. This is an uncharacterized protein from Bacillus subtilis (strain 168).